Consider the following 607-residue polypeptide: Chaperone protein HtpG (607 aa).

Residues 1–323 are a; substrate-binding; the sequence is MKKEEKIFKA…CDSLSLNISR (323 aa). Residues 324-534 are b; that stretch reads EILQQNAELQ…KGGLSLEMEK (211 aa). Positions 535–607 are c; the sequence is TLSEMTNNND…FIKNLNSLIK (73 aa).

The protein belongs to the heat shock protein 90 family. In terms of assembly, homodimer.

It localises to the cytoplasm. Functionally, molecular chaperone. Has ATPase activity. In Fusobacterium nucleatum subsp. nucleatum (strain ATCC 25586 / DSM 15643 / BCRC 10681 / CIP 101130 / JCM 8532 / KCTC 2640 / LMG 13131 / VPI 4355), this protein is Chaperone protein HtpG.